The primary structure comprises 257 residues: Thiazole synthase (257 aa).

Residue Lys96 is the Schiff-base intermediate with DXP of the active site. Residues Gly157, 184 to 185 (AG), and 206 to 207 (NT) each bind 1-deoxy-D-xylulose 5-phosphate.

The protein belongs to the ThiG family. As to quaternary structure, homotetramer. Forms heterodimers with either ThiH or ThiS.

It localises to the cytoplasm. It catalyses the reaction [ThiS sulfur-carrier protein]-C-terminal-Gly-aminoethanethioate + 2-iminoacetate + 1-deoxy-D-xylulose 5-phosphate = [ThiS sulfur-carrier protein]-C-terminal Gly-Gly + 2-[(2R,5Z)-2-carboxy-4-methylthiazol-5(2H)-ylidene]ethyl phosphate + 2 H2O + H(+). It functions in the pathway cofactor biosynthesis; thiamine diphosphate biosynthesis. Its function is as follows. Catalyzes the rearrangement of 1-deoxy-D-xylulose 5-phosphate (DXP) to produce the thiazole phosphate moiety of thiamine. Sulfur is provided by the thiocarboxylate moiety of the carrier protein ThiS. In vitro, sulfur can be provided by H(2)S. The chain is Thiazole synthase from Rhizobium etli (strain ATCC 51251 / DSM 11541 / JCM 21823 / NBRC 15573 / CFN 42).